We begin with the raw amino-acid sequence, 407 residues long: Argininosuccinate synthase (407 aa).

ATP is bound by residues 10-18 and alanine 37; that span reads AYSGGLDTS. L-citrulline-binding residues include tyrosine 90 and serine 95. Position 120 (glycine 120) interacts with ATP. Residues threonine 122, asparagine 126, and aspartate 127 each contribute to the L-aspartate site. Asparagine 126 is a binding site for L-citrulline. L-citrulline is bound by residues arginine 130, serine 181, serine 190, glutamate 266, and tyrosine 278.

It belongs to the argininosuccinate synthase family. Type 1 subfamily. As to quaternary structure, homotetramer.

The protein resides in the cytoplasm. It carries out the reaction L-citrulline + L-aspartate + ATP = 2-(N(omega)-L-arginino)succinate + AMP + diphosphate + H(+). It participates in amino-acid biosynthesis; L-arginine biosynthesis; L-arginine from L-ornithine and carbamoyl phosphate: step 2/3. The sequence is that of Argininosuccinate synthase from Ruegeria sp. (strain TM1040) (Silicibacter sp.).